Consider the following 352-residue polypeptide: Fc receptor-like A (352 aa).

An N-terminal signal peptide occupies residues 1-30; it reads MKLSCTLTQWALYVCPAVLLATQMLLAASS. Positions 46–65 are disordered; the sequence is CQAAAEEDEGDEDDGDMTQS. Positions 50–61 are enriched in acidic residues; the sequence is AEEDEGDEDDGD. Ig-like C2-type domains are found at residues 80–169 and 182–260; these read PFHL…EAAS and PVLK…RQIS. Disulfide bonds link C109–C153 and C202–C250. The segment at 275 to 310 is disordered; sequence KPTASETPPTEALGPLPPPPASSAEQPRFSSPDPHL.

Monomer or homodimer; disulfide-linked. In terms of tissue distribution, highly expressed in spleen. Expressed in immature B-cell and B-cell lines.

It is found in the cytoplasm. In terms of biological role, may be implicated in B-cell differentiation and lymphomagenesis. The sequence is that of Fc receptor-like A (Fcrla) from Mus musculus (Mouse).